The primary structure comprises 435 residues: D-inositol 3-phosphate glycosyltransferase (435 aa).

A 1D-myo-inositol 3-phosphate-binding site is contributed by His16. UDP-N-acetyl-alpha-D-glucosamine is bound by residues 22-23 (QP) and Gly30. Residues 27–32 (DAGGMN), Lys85, Tyr118, Thr142, and Arg162 contribute to the 1D-myo-inositol 3-phosphate site. Arg237, Lys242, and Val303 together coordinate UDP-N-acetyl-alpha-D-glucosamine. Residues Tyr312, Arg313, and Ala315 each contribute to the Mg(2+) site. The UDP-N-acetyl-alpha-D-glucosamine site is built by Glu325 and Glu333. Thr339 contributes to the Mg(2+) binding site.

Belongs to the glycosyltransferase group 1 family. MshA subfamily. Homodimer.

It catalyses the reaction 1D-myo-inositol 3-phosphate + UDP-N-acetyl-alpha-D-glucosamine = 1D-myo-inositol 2-acetamido-2-deoxy-alpha-D-glucopyranoside 3-phosphate + UDP + H(+). Its function is as follows. Catalyzes the transfer of a N-acetyl-glucosamine moiety to 1D-myo-inositol 3-phosphate to produce 1D-myo-inositol 2-acetamido-2-deoxy-glucopyranoside 3-phosphate in the mycothiol biosynthesis pathway. In Kineococcus radiotolerans (strain ATCC BAA-149 / DSM 14245 / SRS30216), this protein is D-inositol 3-phosphate glycosyltransferase.